The chain runs to 1155 residues: MSLRFIVGRAGSGKSHSCLEEVRQRLRQNQGESSIILLVPEQATFQYEYMLATTPELKGMIWAQVLSFRRLAFRVLQEMGGAARAHIDDLGKKMVLRRILEQRKSELKVFHRAAKQPGFADSLASALSELKLYRIEPQELQKGIQHMQEAPGSAIRDKLADLSLLYNDLEEFLSGRFTDPDDYLNLLAQRLPGSRTVQGAEIFIDGFTGFTPQEYGVIEQMLGTADRVHVALCFDPMYLQEPCDELEFFYPTVETYHTLLDMAGALRISLEPPIICGKETPVRFQKDSAIAHLEKYYFRHPLQASDAAQGVSLVACANRRAEVEAAAREIIRLCREEELSWRDIVVVLRDLTNYSDLINTIFNDHGIPVFIDEKRNVLHHPLVELIRSALEVITQHWAYDPVFRYLKTDLIPVQRDDVDRLENYVLAHGIRGNRWNDNRDWTYRRQYTLGEDCDIDDNEAEQLAQLNVVRYAAIEHINNFSKKVANCGNVRQITTALFELLESLSVAERMEAWAKEAEVAGRLIEAKEHAQIWDNVILLLDEIVEAMGEQELNLEEYLQVLEAGLESLKLGLIPPGLDQVVVGTLERSRNPNVKAALVLGISDGVLPARPVEEGLFSDYEREALREIGLNLAPGARRKLFDEQYLIYTALTRASSRLWLSYPQADDEGKALMPSPVIQRVKELLPLIQEEILPVEPPCLGGDLAFIANPSRSLSYLAAMLRETVAGRLVDPVWQDVYSWFVQQPQYQESCRRVLAGLYHVNQETSLPPSMGRRLYGSRLRASVSRLERFTTCPFSHFLSHGLKLKERSQFKLAAPDLGQFFHAALKLFAERIKALSLDWGQLSRGQIITITGEIVEELAPQLQNEILLSTARHRYLIKKLRRTLERAVVTLAEHARRGSFRPVAVEIGFGDNAELPAVQLDLADHCQMEMAGRIDRIDSACEGGQHYYSLIDYKSGQPDIKLADIVHGLKLQLLTYLDVALRYSKQLTQQEALPAAMLYFSVRDPFVASTGPMTEEEAEKNLLKQLKMKGLLLADPLVISKMDKELSGQSDLLPVGLKKNGDFYSNSRVITEEQFKLLRNYLEFKLKSIGQQMVSGDIAISPYQRGKEKACRYCIFKSVCQFDPLLEDNLFRLLADQEEQVLWSLIKESLGDKHE.

The 300-residue stretch at 1–300 (MSLRFIVGRA…AHLEKYYFRH (300 aa)) folds into the UvrD-like helicase ATP-binding domain. 8-15 (GRAGSGKS) serves as a coordination point for ATP. The UvrD-like helicase C-terminal domain occupies 280-590 (TPVRFQKDSA…VVGTLERSRN (311 aa)). Residues C792, C1111, C1114, and C1120 each contribute to the [4Fe-4S] cluster site.

Belongs to the helicase family. AddB/RexB type 1 subfamily. As to quaternary structure, heterodimer of AddA and AddB. Mg(2+) serves as cofactor. It depends on [4Fe-4S] cluster as a cofactor.

Its function is as follows. The heterodimer acts as both an ATP-dependent DNA helicase and an ATP-dependent, dual-direction single-stranded exonuclease. Recognizes the chi site generating a DNA molecule suitable for the initiation of homologous recombination. The AddB subunit has 5' -&gt; 3' nuclease activity but not helicase activity. The sequence is that of ATP-dependent helicase/deoxyribonuclease subunit B from Desulforamulus reducens (strain ATCC BAA-1160 / DSM 100696 / MI-1) (Desulfotomaculum reducens).